We begin with the raw amino-acid sequence, 25 residues long: Omega-conotoxin CVIB (25 aa).

Disulfide bonds link Cys1/Cys16, Cys8/Cys20, and Cys15/Cys25. Cys25 carries the cysteine amide modification.

This sequence belongs to the conotoxin O1 superfamily. Expressed by the venom duct.

It localises to the secreted. Its function is as follows. Omega-conotoxins act at presynaptic membranes, they bind and block voltage-gated calcium channels (Cav). This toxin blocks N-, P- and Q-type calcium channels. It shows high activities on Cav2.1/CACNA1A (IC(50)=11 nM) and Cav2.2/CACNA1B (IC(50)=7.7 nM). In addition, it shows a higher potency when Cav2.2/CACNA1B is only expressed with the ancillary subunit CACNB3 (IC(50)=1.6 nM) than on Cav2.2/CACNA1B expressed with the ancillary subunits CACNA2D1 and CACNB3 (IC(50)=12 nM). Both the Cav2.2/CACNA1B block by this toxin and the recovery are voltage-independent. It is noteworthy that ancillary subunits beta do not modulate recovery from this toxin block, since Cav2.2/CACNA1B expressed with either the ancillary subunit CACNB2a (isoform 2a) or with CACNB3 exhibits moderate recovery. This is Omega-conotoxin CVIB from Conus catus (Cat cone).